The sequence spans 431 residues: MDETATSSEVTETFVSDPTTRQFEEDGHPPLETRHLNMIHEELEKLNISTDVINKMEVQLDLARADFRETQVQWSEKLKELSKQYSSQIAKARPFYELKIKERSLREESQKAAERFERATSILGIAKQQVSLTQESLSRQTSVLPECLEVLNHHIQRVREVEEERTAAESLHASKAHAMLHLAEKIRAMEKDNRYAIKKSRLYFEKRLEFTKILEAQKATILCLEAEVRQKKNDYTTSLRNLERISERIHEERSTGSLESAVSSDQEDQKSDFKSSESLPGNPPPYAPTAPPPYEDKYIIDKDDDSIVLNMIKTEQEEEGEKRNSRSLGSGVILLAQQLIGNGNSTEKHNITPPRHGEEADISYHTRPVGLSDGSDNSEVSSLASFNIGDDDTVSKMLMSHSELIKDIELATDRVGHILKPNIKSVSNAHE.

Residues 1 to 21 (MDETATSSEVTETFVSDPTTR) are compositionally biased toward polar residues. The disordered stretch occupies residues 1–28 (MDETATSSEVTETFVSDPTTRQFEEDGH). Coiled coils occupy residues 149–171 (EVLNHHIQRVREVEEERTAAESL) and 214–247 (LEAQKATILCLEAEVRQKKNDYTTSLRNLERISE). Residues 249–298 (IHEERSTGSLESAVSSDQEDQKSDFKSSESLPGNPPPYAPTAPPPYEDKY) form a disordered region. The span at 255–264 (TGSLESAVSS) shows a compositional bias: polar residues. Residues 281–293 (GNPPPYAPTAPPP) show a composition bias toward pro residues.

This sequence belongs to the SH3BP5 family. As to quaternary structure, interacts with rab-11.1. Binds preferentially to the GDP-bound form of rab-11.1.

In terms of biological role, guanine nucleotide exchange factor for Rab GTPase Rab-11.1. May spatially and temporally regulate the distribution of Rab-11.1 to target membranes during embryogenesis. May play a role in cytokinesis, probably by targeting rab-11.1 to the cleavage furrows. This Caenorhabditis elegans protein is Guanine nucleotide exchange factor rei-2.